The sequence spans 334 residues: Oligopeptide transport ATP-binding protein OppF (334 aa).

In terms of domain architecture, ABC transporter spans 12–265 (LEIADLKVHF…PLHPYTRALM (254 aa)). 57 to 64 (GESGCGKS) is an ATP binding site.

The protein belongs to the ABC transporter superfamily. As to quaternary structure, the complex is composed of two ATP-binding proteins (OppD and OppF), two transmembrane proteins (OppB and OppC) and a solute-binding protein (OppA or MppA).

It is found in the cell inner membrane. The catalysed reaction is a [peptide](out) + ATP + H2O = a [peptide](in) + ADP + phosphate + H(+). The enzyme catalyses L-alanyl-gamma-D-glutamyl-meso-2,6-diaminopimelate(out) + ATP + H2O = L-alanyl-gamma-D-glutamyl-meso-2,6-diaminopimelate(in) + ADP + phosphate + H(+). Its function is as follows. Part of the ABC transporter complex OppABCDF involved in the uptake of oligopeptides and of the ABC transporter complex MppA-OppBCDF involved in the uptake of the cell wall murein tripeptide L-alanyl-gamma-D-glutamyl-meso-diaminopimelate. Probably responsible for energy coupling to the transport system. Plays an important nutritional role and is involved in the recycling of cell wall peptides. In Escherichia coli (strain K12), this protein is Oligopeptide transport ATP-binding protein OppF (oppF).